A 37-amino-acid chain; its full sequence is Mu-agatoxin-Aa1b (37 aa).

Intrachain disulfides connect C2–C18, C9–C23, C17–C33, and C25–C31. Residue S37 is modified to Serine amide.

This sequence belongs to the neurotoxin 07 (Beta/delta-agtx) family. 01 (aga-2) subfamily. As to expression, expressed by the venom gland.

Its subcellular location is the secreted. Insecticidal neurotoxin that induces an irreversible spastic paralysis when injected into insects. Modifies presynaptic voltage-gated sodium channels (Nav), causing them to open at the normal resting potential of the nerve. This leads to spontaneous release of neurotransmitter and repetitive action potentials in motor neurons. This Agelenopsis aperta (North American funnel-web spider) protein is Mu-agatoxin-Aa1b.